A 185-amino-acid chain; its full sequence is HTH-type transcriptional repressor OpcR (185 aa).

The H-T-H motif DNA-binding region spans 49–73; that stretch reads LSELSEATGMSKTRMSQVVREMIDA.

It belongs to the GbsR family.

With respect to regulation, is not choline-responsive. Its function is as follows. Negatively regulates the transcription of the opuC operon. In the absence of GbsR, is also a negative regulator of the opuB operon. Binds to an inverted repeat in the promoter region of the operons. The protein is HTH-type transcriptional repressor OpcR (opcR) of Bacillus subtilis (strain 168).